The primary structure comprises 333 residues: Ketol-acid reductoisomerase (NADP(+)) (333 aa).

One can recognise a KARI N-terminal Rossmann domain in the interval 1 to 171 (MSNDTQPKIA…GGARANIIKT (171 aa)). NADP(+)-binding positions include 14–17 (YGSQ), Arg37, Thr42, and 72–75 (DMVQ). The active site involves His97. Gly123 contributes to the NADP(+) binding site. The region spanning 172–317 (TFKEETETDL…KKLRAKMVWL (146 aa)) is the KARI C-terminal knotted domain. Positions 180, 184, 216, and 220 each coordinate Mg(2+). Ser241 provides a ligand contact to substrate.

Belongs to the ketol-acid reductoisomerase family. It depends on Mg(2+) as a cofactor.

The enzyme catalyses (2R)-2,3-dihydroxy-3-methylbutanoate + NADP(+) = (2S)-2-acetolactate + NADPH + H(+). The catalysed reaction is (2R,3R)-2,3-dihydroxy-3-methylpentanoate + NADP(+) = (S)-2-ethyl-2-hydroxy-3-oxobutanoate + NADPH + H(+). It functions in the pathway amino-acid biosynthesis; L-isoleucine biosynthesis; L-isoleucine from 2-oxobutanoate: step 2/4. It participates in amino-acid biosynthesis; L-valine biosynthesis; L-valine from pyruvate: step 2/4. Its function is as follows. Involved in the biosynthesis of branched-chain amino acids (BCAA). Catalyzes an alkyl-migration followed by a ketol-acid reduction of (S)-2-acetolactate (S2AL) to yield (R)-2,3-dihydroxy-isovalerate. In the isomerase reaction, S2AL is rearranged via a Mg-dependent methyl migration to produce 3-hydroxy-3-methyl-2-ketobutyrate (HMKB). In the reductase reaction, this 2-ketoacid undergoes a metal-dependent reduction by NADPH to yield (R)-2,3-dihydroxy-isovalerate. This is Ketol-acid reductoisomerase (NADP(+)) from Xanthomonas oryzae pv. oryzae (strain MAFF 311018).